A 207-amino-acid polypeptide reads, in one-letter code: Thiamine-phosphate synthase (207 aa).

Residues 36-40 and aspartate 68 each bind 4-amino-2-methyl-5-(diphosphooxymethyl)pyrimidine; that span reads QMRIK. 2 residues coordinate Mg(2+): aspartate 69 and aspartate 88. Serine 106 is a 4-amino-2-methyl-5-(diphosphooxymethyl)pyrimidine binding site. Residue 132-134 coordinates 2-[(2R,5Z)-2-carboxy-4-methylthiazol-5(2H)-ylidene]ethyl phosphate; that stretch reads TKT. Residue lysine 135 participates in 4-amino-2-methyl-5-(diphosphooxymethyl)pyrimidine binding. 2-[(2R,5Z)-2-carboxy-4-methylthiazol-5(2H)-ylidene]ethyl phosphate is bound by residues glycine 162 and 182–183; that span reads IS.

Belongs to the thiamine-phosphate synthase family. The cofactor is Mg(2+).

The catalysed reaction is 2-[(2R,5Z)-2-carboxy-4-methylthiazol-5(2H)-ylidene]ethyl phosphate + 4-amino-2-methyl-5-(diphosphooxymethyl)pyrimidine + 2 H(+) = thiamine phosphate + CO2 + diphosphate. It carries out the reaction 2-(2-carboxy-4-methylthiazol-5-yl)ethyl phosphate + 4-amino-2-methyl-5-(diphosphooxymethyl)pyrimidine + 2 H(+) = thiamine phosphate + CO2 + diphosphate. It catalyses the reaction 4-methyl-5-(2-phosphooxyethyl)-thiazole + 4-amino-2-methyl-5-(diphosphooxymethyl)pyrimidine + H(+) = thiamine phosphate + diphosphate. Its pathway is cofactor biosynthesis; thiamine diphosphate biosynthesis; thiamine phosphate from 4-amino-2-methyl-5-diphosphomethylpyrimidine and 4-methyl-5-(2-phosphoethyl)-thiazole: step 1/1. Condenses 4-methyl-5-(beta-hydroxyethyl)thiazole monophosphate (THZ-P) and 2-methyl-4-amino-5-hydroxymethyl pyrimidine pyrophosphate (HMP-PP) to form thiamine monophosphate (TMP). This is Thiamine-phosphate synthase from Pyrococcus furiosus (strain ATCC 43587 / DSM 3638 / JCM 8422 / Vc1).